Here is a 223-residue protein sequence, read N- to C-terminus: Cytidylate kinase (223 aa).

10 to 18 provides a ligand contact to ATP; that stretch reads GPAGTGKSS.

This sequence belongs to the cytidylate kinase family. Type 1 subfamily.

It localises to the cytoplasm. The catalysed reaction is CMP + ATP = CDP + ADP. It catalyses the reaction dCMP + ATP = dCDP + ADP. The protein is Cytidylate kinase of Mycobacterium leprae (strain Br4923).